The chain runs to 202 residues: FMN-dependent NADH:quinone oxidoreductase (202 aa).

FMN is bound by residues S10 and 95-98; that span reads MYNF.

This sequence belongs to the azoreductase type 1 family. As to quaternary structure, homodimer. FMN is required as a cofactor.

It carries out the reaction 2 a quinone + NADH + H(+) = 2 a 1,4-benzosemiquinone + NAD(+). It catalyses the reaction N,N-dimethyl-1,4-phenylenediamine + anthranilate + 2 NAD(+) = 2-(4-dimethylaminophenyl)diazenylbenzoate + 2 NADH + 2 H(+). Quinone reductase that provides resistance to thiol-specific stress caused by electrophilic quinones. In terms of biological role, also exhibits azoreductase activity. Catalyzes the reductive cleavage of the azo bond in aromatic azo compounds to the corresponding amines. This chain is FMN-dependent NADH:quinone oxidoreductase, found in Pseudoalteromonas atlantica (strain T6c / ATCC BAA-1087).